Consider the following 876-residue polypeptide: Alanine--tRNA ligase (876 aa).

Histidine 565, histidine 569, cysteine 667, and histidine 671 together coordinate Zn(2+).

It belongs to the class-II aminoacyl-tRNA synthetase family. It depends on Zn(2+) as a cofactor.

The protein resides in the cytoplasm. It carries out the reaction tRNA(Ala) + L-alanine + ATP = L-alanyl-tRNA(Ala) + AMP + diphosphate. Catalyzes the attachment of alanine to tRNA(Ala) in a two-step reaction: alanine is first activated by ATP to form Ala-AMP and then transferred to the acceptor end of tRNA(Ala). Also edits incorrectly charged Ser-tRNA(Ala) and Gly-tRNA(Ala) via its editing domain. This chain is Alanine--tRNA ligase, found in Staphylococcus saprophyticus subsp. saprophyticus (strain ATCC 15305 / DSM 20229 / NCIMB 8711 / NCTC 7292 / S-41).